The primary structure comprises 362 residues: Spermidine/putrescine import ATP-binding protein PotA (362 aa).

Residues 4–235 (IKLDHITKQY…PVNDFVARFI (232 aa)) form the ABC transporter domain. An ATP-binding site is contributed by 37–44 (GPSGSGKT).

Belongs to the ABC transporter superfamily. Spermidine/putrescine importer (TC 3.A.1.11.1) family. In terms of assembly, the complex is composed of two ATP-binding proteins (PotA), two transmembrane proteins (PotB and PotC) and a solute-binding protein (PotD).

The protein localises to the cell membrane. The enzyme catalyses ATP + H2O + polyamine-[polyamine-binding protein]Side 1 = ADP + phosphate + polyamineSide 2 + [polyamine-binding protein]Side 1.. Part of the ABC transporter complex PotABCD involved in spermidine/putrescine import. Responsible for energy coupling to the transport system. This chain is Spermidine/putrescine import ATP-binding protein PotA, found in Lactobacillus delbrueckii subsp. bulgaricus (strain ATCC 11842 / DSM 20081 / BCRC 10696 / JCM 1002 / NBRC 13953 / NCIMB 11778 / NCTC 12712 / WDCM 00102 / Lb 14).